The primary structure comprises 250 residues: 2,3-bisphosphoglycerate-dependent phosphoglycerate mutase (250 aa).

Arginine 10, histidine 11, asparagine 17, glycine 24, arginine 62, glutamate 89, tyrosine 92, lysine 100, arginine 116, arginine 117, histidine 184, glycine 185, and asparagine 186 together coordinate (2R)-2,3-bisphosphoglycerate. The active-site Tele-phosphohistidine intermediate is the histidine 11. Glycine 24 provides a ligand contact to (2R)-3-phosphoglycerate. Positions 89, 92, 100, 116, and 117 each coordinate (2R)-3-phosphoglycerate. Catalysis depends on glutamate 89, which acts as the Proton donor/acceptor. Asparagine 186 provides a ligand contact to (2R)-3-phosphoglycerate.

It belongs to the phosphoglycerate mutase family. BPG-dependent PGAM subfamily. Ubiquitously expressed with the highest expression in the sub-tegumental muscle layer (at protein level). Expressed in the tegument (at protein level).

It localises to the tegument. The enzyme catalyses (2R)-2-phosphoglycerate = (2R)-3-phosphoglycerate. Its pathway is carbohydrate degradation; glycolysis; pyruvate from D-glyceraldehyde 3-phosphate: step 3/5. Strongly activated by 2,3-bisphosphoglycerate (2,3-BPG). Inhibited by vanadate in a dose-dependent manner. In terms of biological role, catalyzes interconversion of 3- and 2-phosphoglycerate with 2,3-bisphosphoglycerate (2,3-BPG) as the primer of the reaction. Schistosomula have significant surface phosphoglycerate mutase activity also without 2,3-BPG. Binds human plasminogen and enhances its conversion to active thrombolytic plasmin in the presence of human tissue plasminogen activator (tPA) in vitro. Host-interactive surface protein, which may degrade vascular blood clots surrounding the worm in vivo and thus may help survival of the parasite in its host microenvironment. The chain is 2,3-bisphosphoglycerate-dependent phosphoglycerate mutase from Schistosoma mansoni (Blood fluke).